A 101-amino-acid polypeptide reads, in one-letter code: MAKKSAVARENKRRRLVEANYKKRSELRNIAKSLTASEEEKENARVALNKMRRDTAHIRLHNRCLLTGRPRGYLRKFAISRICFREMASMGEIPGVIKASW.

It belongs to the universal ribosomal protein uS14 family. In terms of assembly, part of the 30S ribosomal subunit. Contacts proteins S3 and S10.

Binds 16S rRNA, required for the assembly of 30S particles and may also be responsible for determining the conformation of the 16S rRNA at the A site. The polypeptide is Small ribosomal subunit protein uS14 (Chlamydia caviae (strain ATCC VR-813 / DSM 19441 / 03DC25 / GPIC) (Chlamydophila caviae)).